The chain runs to 285 residues: Bifunctional protein FolD (285 aa).

NADP(+)-binding positions include 165–167 (GRS) and serine 190.

This sequence belongs to the tetrahydrofolate dehydrogenase/cyclohydrolase family. In terms of assembly, homodimer.

The enzyme catalyses (6R)-5,10-methylene-5,6,7,8-tetrahydrofolate + NADP(+) = (6R)-5,10-methenyltetrahydrofolate + NADPH. It carries out the reaction (6R)-5,10-methenyltetrahydrofolate + H2O = (6R)-10-formyltetrahydrofolate + H(+). Its pathway is one-carbon metabolism; tetrahydrofolate interconversion. Catalyzes the oxidation of 5,10-methylenetetrahydrofolate to 5,10-methenyltetrahydrofolate and then the hydrolysis of 5,10-methenyltetrahydrofolate to 10-formyltetrahydrofolate. The protein is Bifunctional protein FolD of Burkholderia pseudomallei (strain 1106a).